A 387-amino-acid chain; its full sequence is ADP,ATP carrier protein 2, mitochondrial (387 aa).

A mitochondrion-targeting transit peptide spans 1 to 77; the sequence is MADQANQPTV…PVMPTPLFAN (77 aa). Solcar repeat units lie at residues 85–178, 190–282, and 290–376; these read KNFM…FKRL, KWFA…IKPV, and DNFF…LQIL. Helical transmembrane passes span 87–114, 155–179, 188–208, 258–279, and 293–313; these read FMID…VKLL, TANV…KRLF, YWKW…SSLF, FNIS…YDSI, and FASF…SYPI. 2 residues coordinate ADP: R160 and K172. R317 serves as a coordination point for ADP. The tract at residues 317-322 is important for transport activity; the sequence is RRRMMM. Residues 317–322 carry the Nucleotide carrier signature motif motif; it reads RRRMMM. A helical transmembrane segment spans residues 353-373; it reads AGANILRAIAGAGVLSGYDQL.

This sequence belongs to the mitochondrial carrier (TC 2.A.29) family. In terms of assembly, monomer.

It localises to the mitochondrion inner membrane. It carries out the reaction ADP(in) + ATP(out) = ADP(out) + ATP(in). The matrix-open state (m-state) is inhibited by the membrane-permeable bongkrekic acid (BKA). The cytoplasmic-open state (c-state) is inhibited by the membrane-impermeable toxic inhibitor carboxyatractyloside (CATR). Functionally, ADP:ATP antiporter that mediates import of ADP into the mitochondrial matrix for ATP synthesis, and export of ATP out to fuel the cell. Cycles between the cytoplasmic-open state (c-state) and the matrix-open state (m-state): operates by the alternating access mechanism with a single substrate-binding site intermittently exposed to either the cytosolic (c-state) or matrix (m-state) side of the inner mitochondrial membrane. The polypeptide is ADP,ATP carrier protein 2, mitochondrial (ANT2) (Zea mays (Maize)).